Consider the following 705-residue polypeptide: CAP-Gly domain-containing linker protein 4 (705 aa).

3 ANK repeats span residues 65 to 101 (TSVSELFAILRQWVPQVQQNIDIIGNEILKRGCNVND), 149 to 180 (TNMNALHYAAYFDVPELIRVILKTSKPKDVDA), and 186 to 215 (NFGTALHIAAYNLCAGAVKCLLEQGANPAF). Residues 303–345 (GTTEFASGQWAGIELDEPEGKNNGSVGKVQYFKCAPKYGIFAP) enclose the CAP-Gly 1 domain. Disordered regions lie at residues 391–410 (MTSKKDSASESTLSLPPGEE) and 431–479 (TSSL…ANNS). A compositionally biased stretch (polar residues) spans 441–452 (PKKQNAISSNKK). The segment covering 455–479 (SKSPSLSSRASAGLNSSATSTANNS) has biased composition (low complexity). The 43-residue stretch at 505-547 (GTTNFAPGYWYGIELEKPHGKNDGSVGGVQYFSCSPRYGIFAP) folds into the CAP-Gly 2 domain. Phosphoserine is present on residues Ser557 and Ser609. Residues 644–686 (GPTDFASGIWLGLELRSAKGKNDGSVGDKRYFTCKPNHGVLVR) form the CAP-Gly 3 domain.

In Homo sapiens (Human), this protein is CAP-Gly domain-containing linker protein 4 (CLIP4).